We begin with the raw amino-acid sequence, 222 residues long: MTRLVLGSASPGRLKVLRDAGIEPLVIASHVDEDVVIAALGPDAVPSDVVCVLAAAKAAQVATTLTGTQRIVAADCVVVACDSMLYIEGRLLGKPASIDEAREQWRSMAGRAGQLYTGHGVIRLQDNKTVYRSAETAITTVYFGTPSASDLEAYLASGESLRVAGGFTLDGLGGWFIDGVQGNPSNVIGLSLPLLRSLVQRCGLSVAALWAGNAGGPAHKQQ.

Residue D82 is the Proton acceptor of the active site.

Belongs to the Maf family. Requires a divalent metal cation as cofactor.

Its subcellular location is the cytoplasm. It carries out the reaction a ribonucleoside 5'-triphosphate + H2O = a ribonucleoside 5'-phosphate + diphosphate + H(+). The enzyme catalyses a 2'-deoxyribonucleoside 5'-triphosphate + H2O = a 2'-deoxyribonucleoside 5'-phosphate + diphosphate + H(+). Nucleoside triphosphate pyrophosphatase. May have a dual role in cell division arrest and in preventing the incorporation of modified nucleotides into cellular nucleic acids. The chain is Nucleoside triphosphate pyrophosphatase from Mycobacterium bovis (strain ATCC BAA-935 / AF2122/97).